Here is a 333-residue protein sequence, read N- to C-terminus: Transaldolase (333 aa).

Lysine 136 (schiff-base intermediate with substrate) is an active-site residue.

It belongs to the transaldolase family. Type 1 subfamily. In terms of assembly, homodimer.

It localises to the cytoplasm. It catalyses the reaction D-sedoheptulose 7-phosphate + D-glyceraldehyde 3-phosphate = D-erythrose 4-phosphate + beta-D-fructose 6-phosphate. The protein operates within carbohydrate degradation; pentose phosphate pathway; D-glyceraldehyde 3-phosphate and beta-D-fructose 6-phosphate from D-ribose 5-phosphate and D-xylulose 5-phosphate (non-oxidative stage): step 2/3. Transaldolase is important for the balance of metabolites in the pentose-phosphate pathway. The polypeptide is Transaldolase (Acidobacterium capsulatum (strain ATCC 51196 / DSM 11244 / BCRC 80197 / JCM 7670 / NBRC 15755 / NCIMB 13165 / 161)).